Here is a 1356-residue protein sequence, read N- to C-terminus: DNA-directed RNA polymerase subunit beta (1356 aa).

This sequence belongs to the RNA polymerase beta chain family. The RNAP catalytic core consists of 2 alpha, 1 beta, 1 beta' and 1 omega subunit. When a sigma factor is associated with the core the holoenzyme is formed, which can initiate transcription.

It carries out the reaction RNA(n) + a ribonucleoside 5'-triphosphate = RNA(n+1) + diphosphate. Functionally, DNA-dependent RNA polymerase catalyzes the transcription of DNA into RNA using the four ribonucleoside triphosphates as substrates. This Phenylobacterium zucineum (strain HLK1) protein is DNA-directed RNA polymerase subunit beta.